The following is a 1135-amino-acid chain: Receptor-type guanylate cyclase gcy-4 (1135 aa).

An N-terminal signal peptide occupies residues 1–20 (MTQLLRFLLILSIFCDFSHS). Residues 21–483 (QRPTIRVGIA…CPIPFFDQYR (463 aa)) are Extracellular-facing. N-linked (GlcNAc...) asparagine glycans are attached at residues Asn-37, Asn-193, Asn-209, Asn-251, Asn-349, Asn-375, Asn-431, Asn-436, and Asn-447. The chain crosses the membrane as a helical span at residues 484–504 (LLIFVFVIVAGLLILAIFTCL). The Cytoplasmic segment spans residues 505–1135 (TSMVRNQRAE…VMRREMMRVS (631 aa)). The tract at residues 535–560 (KGRRLSTDSENSTVTKSSKGSSSKNF) is disordered. The Protein kinase domain maps to 545–837 (NSTVTKSSKG…KDNLMDHVFS (293 aa)). A compositionally biased stretch (low complexity) spans 546-560 (STVTKSSKGSSSKNF). A Guanylate cyclase domain is found at 895-1025 (TVFFSDLVKF…DTVNTASRME (131 aa)).

The protein belongs to the adenylyl cyclase class-4/guanylyl cyclase family. Expressed bilaterally in ASE neurons.

Its subcellular location is the cell membrane. The catalysed reaction is GTP = 3',5'-cyclic GMP + diphosphate. Its function is as follows. Guanylate cyclase involved in the production of the second messenger cGMP. Regulates chemotaxis responses toward salt ions in ASE sensory neurons. The polypeptide is Receptor-type guanylate cyclase gcy-4 (Caenorhabditis briggsae).